A 1243-amino-acid chain; its full sequence is Serine/threonine-protein kinase/endoribonuclease IRE1 (1243 aa).

Positions 1 to 35 are cleaved as a signal peptide; sequence MMRRPPSQGRWSASHQKLLLAFAFILIPWLQLADA. Residues 36–585 lie on the Lumenal side of the membrane; it reads QQQPQQPQIR…VKALPQSAAN (550 aa). Disordered stretches follow at residues 70–132 and 149–172; these read HAAP…KPNY and QPVR…GLAS. A compositionally biased stretch (basic and acidic residues) spans 73 to 85; the sequence is PDVHPEAKFDTVN. The span at 90–99 shows a compositional bias: polar residues; it reads QQSTASPQQH. The segment covering 163-172 has biased composition (low complexity); the sequence is SSSAASGLAS. 3 N-linked (GlcNAc...) asparagine glycosylation sites follow: Asn-226, Asn-470, and Asn-554. The chain crosses the membrane as a helical span at residues 586-606; that stretch reads SVIDFVSNPILIIFLIGSLIY. Topologically, residues 607–1243 are cytoplasmic; that stretch reads NEKKLRRSYH…FREYYEPAGL (637 aa). The tract at residues 638 to 765 is disordered; sequence GDESGDDKDG…QSHENDPALT (128 aa). The segment covering 650–660 has biased composition (low complexity); it reads PSSPSPRSQPQ. The segment covering 674–693 has biased composition (basic and acidic residues); that stretch reads ERNAGDQDKVKDNRSLHDVS. The segment covering 732–749 has biased composition (basic residues); sequence KKKKAHRGRRGGVKHRKG. The region spanning 809–1105 is the Protein kinase domain; sequence VDTDVELGMG…SREVMAHPFF (297 aa). Residues 815 to 823 and Lys-837 contribute to the ATP site; that span reads LGMGSNGTV. Ser-819, Lys-837, Glu-881, and Cys-883 together coordinate ADP. The active-site Proton acceptor is Asp-931. 2 residues coordinate Mg(2+): Asn-936 and Asp-953. One can recognise a KEN domain in the interval 1108–1240; it reads PKKRLAFLCD…TDRFREYYEP (133 aa).

It belongs to the protein kinase superfamily. Ser/Thr protein kinase family. Mg(2+) is required as a cofactor. Autophosphorylated mainly on serine residues; phosphorylation enables nucleotide binding by the active site.

It is found in the endoplasmic reticulum membrane. It catalyses the reaction L-seryl-[protein] + ATP = O-phospho-L-seryl-[protein] + ADP + H(+). The catalysed reaction is L-threonyl-[protein] + ATP = O-phospho-L-threonyl-[protein] + ADP + H(+). Functionally, senses unfolded proteins in the lumen of the endoplasmic reticulum via its N-terminal domain which leads to enzyme auto-activation. The active endoribonuclease domain splices precursor mRNAs to produce their mature form which then induces transcription of UPR target genes. This is Serine/threonine-protein kinase/endoribonuclease IRE1 from Hypocrea jecorina (strain QM6a) (Trichoderma reesei).